The primary structure comprises 327 residues: Probable cell division protein WhiA (327 aa).

The H-T-H motif DNA-binding region spans 275–308 (SLEELGRLADPPMTKDAVAGRIRRLLSMADRKAK).

This sequence belongs to the WhiA family.

Involved in cell division and chromosome segregation. In Mycobacterium bovis (strain ATCC BAA-935 / AF2122/97), this protein is Probable cell division protein WhiA.